Here is a 437-residue protein sequence, read N- to C-terminus: Phosphomethylpyrimidine synthase (437 aa).

Substrate is bound by residues asparagine 69, methionine 98, tyrosine 127, histidine 163, 185–187 (SRG), 226–229 (DALR), and glutamate 265. Residue histidine 269 participates in Zn(2+) binding. Residue tyrosine 292 coordinates substrate. Histidine 333 provides a ligand contact to Zn(2+). [4Fe-4S] cluster is bound by residues cysteine 409, cysteine 412, and cysteine 416.

It belongs to the ThiC family. [4Fe-4S] cluster serves as cofactor.

The enzyme catalyses 5-amino-1-(5-phospho-beta-D-ribosyl)imidazole + S-adenosyl-L-methionine = 4-amino-2-methyl-5-(phosphooxymethyl)pyrimidine + CO + 5'-deoxyadenosine + formate + L-methionine + 3 H(+). Its pathway is cofactor biosynthesis; thiamine diphosphate biosynthesis. Catalyzes the synthesis of the hydroxymethylpyrimidine phosphate (HMP-P) moiety of thiamine from aminoimidazole ribotide (AIR) in a radical S-adenosyl-L-methionine (SAM)-dependent reaction. This chain is Phosphomethylpyrimidine synthase, found in Alkaliphilus oremlandii (strain OhILAs) (Clostridium oremlandii (strain OhILAs)).